A 345-amino-acid chain; its full sequence is Fructose-1,6-bisphosphatase class 1 2 (345 aa).

Mg(2+)-binding residues include Glu90, Asp109, Leu111, and Asp112. Substrate-binding positions include 112–115 (DGSS) and Asn200. Glu272 is a Mg(2+) binding site.

Belongs to the FBPase class 1 family. In terms of assembly, homotetramer. Requires Mg(2+) as cofactor.

It is found in the cytoplasm. It carries out the reaction beta-D-fructose 1,6-bisphosphate + H2O = beta-D-fructose 6-phosphate + phosphate. It functions in the pathway carbohydrate biosynthesis; gluconeogenesis. The protein is Fructose-1,6-bisphosphatase class 1 2 of Nitrobacter hamburgensis (strain DSM 10229 / NCIMB 13809 / X14).